The primary structure comprises 328 residues: Versiconal hemiacetal acetate esterase (328 aa).

The short motif at 82 to 84 (HGG) is the Involved in the stabilization of the negatively charged intermediate by the formation of the oxyanion hole element. Catalysis depends on residues Ser156, Asp260, and His290.

It belongs to the 'GDXG' lipolytic enzyme family.

The enzyme catalyses (2S,3S)-versiconal hemiacetal acetate + H2O = (2S-3S)-versiconal hemiacetal + acetate + H(+). It catalyses the reaction (3S)-versiconol acetate + H2O = (S)-versiconol + acetate + H(+). It participates in mycotoxin biosynthesis. Functionally, versiconal hemiacetal acetate esterase; part of the fragmented gene cluster that mediates the biosynthesis of dothistromin (DOTH), a polyketide toxin very similar in structure to the aflatoxin precursor, versicolorin B. The first step of the pathway is the conversion of acetate to norsolorinic acid (NOR) and requires the fatty acid synthase subunits hexA and hexB, as well as the polyketide synthase pksA. PksA combines a hexanoyl starter unit and 7 malonyl-CoA extender units to synthesize the precursor NOR. The hexanoyl starter unit is provided to the acyl-carrier protein (ACP) domain by the fungal fatty acid synthase hexA/hexB. The second step is the conversion of NOR to averantin (AVN) and requires the norsolorinic acid ketoreductase nor1, which catalyzes the dehydration of norsolorinic acid to form (1'S)-averantin. The cytochrome P450 monooxygenase avnA then catalyzes the hydroxylation of AVN to 5'hydroxyaverantin (HAVN). The next step is performed by adhA that transforms HAVN to averufin (AVF). Averufin might then be converted to hydroxyversicolorone by cypX and avfA. Hydroxyversicolorone is further converted versiconal hemiacetal acetate (VHA) by moxY. VHA is then the substrate for the versiconal hemiacetal acetate esterase est1 to yield versiconal (VAL). Versicolorin B synthase vbsA then converts VAL to versicolorin B (VERB) by closing the bisfuran ring. Then, the activity of the versicolorin B desaturase verB leads to versicolorin A (VERA). DotB, a predicted chloroperoxidase, may perform epoxidation of the A-ring of VERA. Alternatively, a cytochrome P450, such as cypX or avnA could catalyze this step. It is also possible that another, uncharacterized, cytochrome P450 enzyme is responsible for this step. Opening of the epoxide could potentially be achieved by the epoxide hydrolase epoA. However, epoA seems not to be required for DOTH biosynthesis, but other epoxide hydrolases may have the ability to complement this hydrolysis. Alternatively, opening of the epoxide ring could be achieved non-enzymatically. The next step is the deoxygenation of ring A to yield the 5,8-dihydroxyanthraquinone which is most likely catalyzed by the NADPH dehydrogenase encoded by ver1. The last stages of DOTH biosynthesis are proposed to involve hydroxylation of the bisfuran. OrdB and norB might have oxidative roles here. An alternative possibility is that cytochrome P450 monoogenases such as avnA and cypX might perform these steps in addition to previously proposed steps. This is Versiconal hemiacetal acetate esterase from Dothistroma septosporum (strain NZE10 / CBS 128990) (Red band needle blight fungus).